The sequence spans 1462 residues: FYVE, RhoGEF and PH domain-containing protein 5 (1462 aa).

Disordered stretches follow at residues Gly37 to Glu323, Tyr492 to Ile512, Ser592 to Val613, His670 to Ser718, Glu746 to Ile777, and Cys851 to Val887. The span at Pro72 to Gly82 shows a compositional bias: basic and acidic residues. Composition is skewed to acidic residues over residues Ser95–Gly106 and Glu137–Ala151. Positions Ser161–Ser177 are enriched in basic and acidic residues. Composition is skewed to acidic residues over residues Gly211–Gly220 and Met242–Glu255. Positions Ser592–Ser611 are enriched in polar residues. The span at Ser676 to Ser685 shows a compositional bias: low complexity. The span at Pro858–Val887 shows a compositional bias: basic and acidic residues. The DH domain maps to Arg892–Ser1084. A PH 1 domain is found at Glu1113 to Pro1207. An FYVE-type zinc finger spans residues Val1242–Lys1301. Residues Cys1248, Cys1251, Cys1264, Cys1267, Cys1272, Cys1275, Cys1293, and Cys1296 each contribute to the Zn(2+) site. Residues Gly1363–Val1461 enclose the PH 2 domain.

Expressed in endothelial cells (at protein level).

Its subcellular location is the cytoplasm. It localises to the cytoskeleton. It is found in the cell projection. The protein resides in the ruffle membrane. The protein localises to the endoplasmic reticulum. Its subcellular location is the golgi apparatus. It localises to the early endosome. Its function is as follows. Activates CDC42, a member of the Ras-like family of Rho- and Rac proteins, by exchanging bound GDP for free GTP. Mediates VEGF-induced CDC42 activation. May regulate proangiogenic action of VEGF in vascular endothelial cells, including network formation, directional movement and proliferation. May play a role in regulating the actin cytoskeleton and cell shape. The protein is FYVE, RhoGEF and PH domain-containing protein 5 (FGD5) of Homo sapiens (Human).